The chain runs to 37 residues: Large ribosomal subunit protein bL36 (37 aa).

This sequence belongs to the bacterial ribosomal protein bL36 family.

In Maridesulfovibrio salexigens (strain ATCC 14822 / DSM 2638 / NCIMB 8403 / VKM B-1763) (Desulfovibrio salexigens), this protein is Large ribosomal subunit protein bL36.